Reading from the N-terminus, the 788-residue chain is Protein translocase subunit SecA 2 (788 aa).

ATP contacts are provided by residues Gln-86, 104–108, and Asp-493; that span reads GEGKT.

It belongs to the SecA family. In terms of assembly, monomer and homodimer. Part of the essential Sec protein translocation apparatus which comprises SecA, SecYEG and auxiliary proteins SecDF. Other proteins may also be involved.

The protein resides in the cell membrane. Its subcellular location is the cytoplasm. The enzyme catalyses ATP + H2O + cellular proteinSide 1 = ADP + phosphate + cellular proteinSide 2.. Part of the Sec protein translocase complex. Interacts with the SecYEG preprotein conducting channel. Has a central role in coupling the hydrolysis of ATP to the transfer of proteins into and across the cell membrane, serving as an ATP-driven molecular motor driving the stepwise translocation of polypeptide chains across the membrane. The protein is Protein translocase subunit SecA 2 of Bacillus anthracis.